Reading from the N-terminus, the 435-residue chain is MNIVILGTQWGDEGKGKIVDMLTEDVAAVVRFQGGHNAGHTLIIDGEKTILRLIPSGILREGVLCLIGNGVVLSPPALMEEIEELNAKGIPVTERLRISSACNLLLPYHVALDKAREAELGTKAIGTTGRGIGPAYEDKVARRGIRAMDLLHPDQLLEKIKKATAYHNIQLEHYYHQTPLDYQSIYNQLMEFREKIKPMIGDVSALLGNLRRQNKHIIFEGAQGSLLDIDLGTYPYVTSSNTTAGSAATGSGFGPLYFDRVLGITKAYVTRVGAGPFPTELTNEEGKKMAKRGNEFGSVTGRPRRCGWFDVISMRRTIQINSLTGIVLTKLDVLDEFAKIHLCTAYRCDGEVVNEPPFDQSLLESCEPVYEEMPGWQTSTYGLTDYSEMPKEARNYISRLEELLGVPITIISTGPDRKHTIVRQAVFNQVITAKG.

Residues 11 to 17 (GDEGKGK) and 39 to 41 (GHT) contribute to the GTP site. The active-site Proton acceptor is the D12. Mg(2+)-binding residues include D12 and G39. IMP contacts are provided by residues 12–15 (DEGK), 37–40 (NAGH), T128, R142, Q223, T238, and R302. Residue H40 is the Proton donor of the active site. Position 298–304 (298–304 (SVTGRPR)) interacts with substrate. GTP is bound by residues R304, 330-332 (KLD), and 412-414 (STG).

This sequence belongs to the adenylosuccinate synthetase family. As to quaternary structure, homodimer. Mg(2+) serves as cofactor.

The protein resides in the cytoplasm. The enzyme catalyses IMP + L-aspartate + GTP = N(6)-(1,2-dicarboxyethyl)-AMP + GDP + phosphate + 2 H(+). It participates in purine metabolism; AMP biosynthesis via de novo pathway; AMP from IMP: step 1/2. Functionally, plays an important role in the de novo pathway of purine nucleotide biosynthesis. Catalyzes the first committed step in the biosynthesis of AMP from IMP. This Coxiella burnetii (strain CbuK_Q154) (Coxiella burnetii (strain Q154)) protein is Adenylosuccinate synthetase.